A 227-amino-acid chain; its full sequence is Extracellular small neutral protease (227 aa).

A signal peptide spans 1–29 (MRITLPLLSTAVGLGLTAAVLGTGPAATA). The propeptide occupies 30 to 42 (AAPQEPVRAAQLG). Asp-156 and Thr-158 together coordinate Ca(2+). His-163 is a binding site for Zn(2+). The active site involves Glu-164. The Zn(2+) site is built by His-167 and Asp-173. A disulfide bridge connects residues Cys-179 and Cys-192.

The protein belongs to the peptidase M7 family. Requires Ca(2+) as cofactor. Zn(2+) is required as a cofactor. Post-translationally, the N-terminus is blocked.

The protein localises to the secreted. It carries out the reaction Hydrolyzes proteins with a preference for Tyr or Phe in the P1' position. Has no action on amino-acid p-nitroanilides.. The protein is Extracellular small neutral protease (snpA) of Streptomyces lividans.